The following is a 719-amino-acid chain: Potassium-transporting ATPase ATP-binding subunit (719 aa).

4 helical membrane passes run Leu35 to Phe55, Val62 to Glu82, Ile228 to Gly248, and Phe254 to Met274. The 4-aspartylphosphate intermediate role is filled by Asp318. ATP is bound by residues Asp355 and Glu359. The tract at residues Gly372 to Pro396 is disordered. A compositionally biased stretch (polar residues) spans Lys373–Ser383. ATP contacts are provided by residues Phe416–Ser423 and Lys435. Residues Asp554 and Asp558 each contribute to the Mg(2+) site. 3 helical membrane passes run Phe624–Leu644, Ala652–Leu672, and Leu698–Phe718.

The protein belongs to the cation transport ATPase (P-type) (TC 3.A.3) family. Type IA subfamily. In terms of assembly, the system is composed of three essential subunits: KdpA, KdpB and KdpC. The complex also contains KdpF, a small non-essential subunit.

The protein resides in the cell membrane. It catalyses the reaction K(+)(out) + ATP + H2O = K(+)(in) + ADP + phosphate + H(+). Functionally, part of the high-affinity ATP-driven potassium transport (or Kdp) system, which catalyzes the hydrolysis of ATP coupled with the electrogenic transport of potassium into the cytoplasm. This subunit is responsible for energy coupling to the transport system and for the release of the potassium ions to the cytoplasm. The Kdp system is essential for growth under K(+) limitation, and for survival under desiccation and salt crystal inclusion. The chain is Potassium-transporting ATPase ATP-binding subunit from Halobacterium salinarum (strain ATCC 29341 / DSM 671 / R1).